The primary structure comprises 259 residues: DNA adenine methylase (259 aa).

Residues Tyr-7, Lys-11, Phe-32 to Ser-37, Asp-50, His-156 to Phe-157, Asp-171, and Tyr-181 each bind S-adenosyl-L-methionine.

Belongs to the N(4)/N(6)-methyltransferase family. In terms of assembly, monomer.

The enzyme catalyses a 2'-deoxyadenosine in DNA + S-adenosyl-L-methionine = an N(6)-methyl-2'-deoxyadenosine in DNA + S-adenosyl-L-homocysteine + H(+). An alpha subtype methylase, recognizes the double-stranded sequence 5'-GATC-3' and methylates A-2. Also acts on 5-hydroxymethylcytosine (hmC)-containing DNA, the normal base in this virus. May prevent degradation of viral DNA by the host restriction-modification antiviral defense system. This Enterobacteria phage T4 (Bacteriophage T4) protein is DNA adenine methylase.